We begin with the raw amino-acid sequence, 114 residues long: Large ribosomal subunit protein bL20c (114 aa).

It belongs to the bacterial ribosomal protein bL20 family.

Its subcellular location is the plastid. The protein resides in the cyanelle. Binds directly to 23S ribosomal RNA and is necessary for the in vitro assembly process of the 50S ribosomal subunit. It is not involved in the protein synthesizing functions of that subunit. The chain is Large ribosomal subunit protein bL20c (rpl20) from Cyanophora paradoxa.